Consider the following 185-residue polypeptide: Heavy metal-associated isoprenylated plant protein 11 (185 aa).

Residues 39–106 enclose the HMA domain; it reads QQNTNVVFKL…ICKHVAIIAA (68 aa). The span at 109 to 158 shows a compositional bias: basic and acidic residues; it reads IREPEQNRNPVTRREPNREPEQNRSRVTRREPSREPEPNRAPLARRESRP. The segment at 109–185 is disordered; it reads IREPEQNRNP…GENSDGCIIM (77 aa). Cys182 is subject to Cysteine methyl ester. Cys182 carries S-farnesyl cysteine lipidation. A propeptide spans 183-185 (removed in mature form); it reads IIM.

The protein belongs to the HIPP family.

In terms of biological role, probable heavy-metal-binding protein. This is Heavy metal-associated isoprenylated plant protein 11 from Arabidopsis thaliana (Mouse-ear cress).